The chain runs to 338 residues: MIHKNWAELIKPTQLVVKPGADPARVATVIAEPLERGFGLTLGNALRRVLLSSLQGAAITSVQIDNVLHEFSSVAGVREDVTDIVLNLKGVSIKMDVEGPKRLSISAKGPGVVTAGDISESNGIEILNKDHVICHLDEGADVFMELTVNTGKGYVAADKNRPEDAPIGLIPIDAIYSPVKKVSYEVTPTREGQVLDYDKLTMRVETDGGLTPEDAVAYAARILQDQLSIFVNFEEPESATRHDVEDGLEFNPLLLKKVDELELSVRSANCLKNDNIVYIGDLIQKTEAEMLRTPNFGRKSLNEIKEVLSGMGLHLGMDVEDWPPENIEDLAKRFEDQF.

The tract at residues 1 to 234 (MIHKNWAELI…DQLSIFVNFE (234 aa)) is alpha N-terminal domain (alpha-NTD). Residues 250-338 (FNPLLLKKVD…DLAKRFEDQF (89 aa)) form an alpha C-terminal domain (alpha-CTD) region.

The protein belongs to the RNA polymerase alpha chain family. As to quaternary structure, homodimer. The RNAP catalytic core consists of 2 alpha, 1 beta, 1 beta' and 1 omega subunit. When a sigma factor is associated with the core the holoenzyme is formed, which can initiate transcription.

It carries out the reaction RNA(n) + a ribonucleoside 5'-triphosphate = RNA(n+1) + diphosphate. In terms of biological role, DNA-dependent RNA polymerase catalyzes the transcription of DNA into RNA using the four ribonucleoside triphosphates as substrates. The chain is DNA-directed RNA polymerase subunit alpha from Cereibacter sphaeroides (strain ATCC 17025 / ATH 2.4.3) (Rhodobacter sphaeroides).